Here is a 211-residue protein sequence, read N- to C-terminus: Lysozyme g (211 aa).

Residues 1–26 (MLGKNDPMCLVLVLLGLTALLGICQG) form the signal peptide. Disulfide bonds link Cys-30-Cys-86 and Cys-44-Cys-55. Residues Glu-99 and Asp-112 contribute to the active site.

The protein belongs to the glycosyl hydrolase 23 family. Granulocyte compartment of myelomonocytic cells.

Its subcellular location is the secreted. It carries out the reaction Hydrolysis of (1-&gt;4)-beta-linkages between N-acetylmuramic acid and N-acetyl-D-glucosamine residues in a peptidoglycan and between N-acetyl-D-glucosamine residues in chitodextrins.. This chain is Lysozyme g, found in Gallus gallus (Chicken).